Here is a 122-residue protein sequence, read N- to C-terminus: Large ribosomal subunit protein bL17 (122 aa).

Belongs to the bacterial ribosomal protein bL17 family. As to quaternary structure, part of the 50S ribosomal subunit. Contacts protein L32.

This Staphylococcus carnosus (strain TM300) protein is Large ribosomal subunit protein bL17.